The chain runs to 224 residues: Deoxyribose-phosphate aldolase (224 aa).

The active-site Proton donor/acceptor is the Asp92. The active-site Schiff-base intermediate with acetaldehyde is Lys155. The active-site Proton donor/acceptor is the Lys184.

Belongs to the DeoC/FbaB aldolase family. DeoC type 1 subfamily.

The protein localises to the cytoplasm. The enzyme catalyses 2-deoxy-D-ribose 5-phosphate = D-glyceraldehyde 3-phosphate + acetaldehyde. The protein operates within carbohydrate degradation; 2-deoxy-D-ribose 1-phosphate degradation; D-glyceraldehyde 3-phosphate and acetaldehyde from 2-deoxy-alpha-D-ribose 1-phosphate: step 2/2. Catalyzes a reversible aldol reaction between acetaldehyde and D-glyceraldehyde 3-phosphate to generate 2-deoxy-D-ribose 5-phosphate. The chain is Deoxyribose-phosphate aldolase from Clostridium perfringens (strain 13 / Type A).